Here is a 376-residue protein sequence, read N- to C-terminus: MSSTAGRLVTSKSELDLDHPNIEDYLPSGSSINEPRGKLSLRDLLDISPTLTEAAGAIVDDSFTRCFKSNPPEPWNWNIYLFPLYCFGVVVRYCILFPLRCFTLAFGWIIFLSLFIPVNALLKGQDRLRKKIERVLVEMICSFFVASWTGVVKYHGPRPSIRPKQVYVANHTSMIDFIVLEQMTAFAVIMQKHPGWVGLLQSTILESVGCIWFNRSEAKDREIVAKKLRDHVQGADSNPLLIFPEGTCVNNNYTVMFKKGAFELDCTVCPIAIKYNKIFVDAFWNSRKQSFTMHLLQLMTSWAVVCEVWYLEPQTIRPGETGIEFAERVRDMISLRAGLKKVPWDGYLKYSRPSPKHSERKQQSFAESILARLEEK.

At 1–78 (MSSTAGRLVT…SNPPEPWNWN (78 aa)) the chain is on the cytoplasmic side. A Phosphoserine modification is found at S13. The next 3 helical transmembrane spans lie at 79-99 (IYLF…LFPL), 102-122 (FTLA…NALL), and 135-155 (VLVE…VKYH). At 156-376 (GPRPSIRPKQ…ESILARLEEK (221 aa)) the chain is on the cytoplasmic side. The segment at 168-180 (VANHTSMIDFIVL) is catalytic. Residues 171 to 176 (HTSMID) carry the HXXXXD motif motif. Position 209–218 (209–218 (GCIWFNRSEA)) interacts with sn-glycerol 3-phosphate. Positions 242 to 262 (IFPEGTCVNNNYTVMFKKGAF) are glycerol-3-phosphate binding. The catalytic stretch occupies residues 266 to 275 (CTVCPIAIKY). An endoplasmic reticulum targeting region spans residues 369 to 373 (ILARL).

This sequence belongs to the 1-acyl-sn-glycerol-3-phosphate acyltransferase family. Self-interacts. Interacts with LPAT2 and LPCAT2. As to expression, up-regulated during embryogenesis. Expressed in seedlings, leaves, stems, roots, floral buds, flowers, pollen, and siliques at various developmental stages.

The protein resides in the endoplasmic reticulum membrane. It catalyses the reaction sn-glycerol 3-phosphate + an acyl-CoA = a 1-acyl-sn-glycero-3-phosphate + CoA. It participates in glycerolipid metabolism; triacylglycerol biosynthesis. Its function is as follows. Essential protein. Required for male and female gametophytes development. Exhibits sn-1 acyltransferase activity with high specificity for acyl-coenzyme A, thus triggering storage lipid biosynthesis and playing an important role in the Kennedy pathway of glycerolipid biosynthesis. Catalyzes triacylglycerol (TAG) accumulation involved in membrane lipid and oil biosynthesis, especially in seeds. Also contributes to the biosynthesis of both polar lipids and TAG in developing leaves, as well as lipid droplet production in developing pollen grains. Seems to not contribute to surface lipid biosynthesis (e.g. waxes and cutin). The polypeptide is Glycerol-3-phosphate acyltransferase 9 (Arabidopsis thaliana (Mouse-ear cress)).